We begin with the raw amino-acid sequence, 345 residues long: N-acetyl-gamma-glutamyl-phosphate reductase (345 aa).

Cys-149 is a catalytic residue.

This sequence belongs to the NAGSA dehydrogenase family. Type 1 subfamily.

It is found in the cytoplasm. The catalysed reaction is N-acetyl-L-glutamate 5-semialdehyde + phosphate + NADP(+) = N-acetyl-L-glutamyl 5-phosphate + NADPH + H(+). Its pathway is amino-acid biosynthesis; L-arginine biosynthesis; N(2)-acetyl-L-ornithine from L-glutamate: step 3/4. Catalyzes the NADPH-dependent reduction of N-acetyl-5-glutamyl phosphate to yield N-acetyl-L-glutamate 5-semialdehyde. In Janthinobacterium sp. (strain Marseille) (Minibacterium massiliensis), this protein is N-acetyl-gamma-glutamyl-phosphate reductase.